The sequence spans 80 residues: Exodeoxyribonuclease 7 small subunit (80 aa).

This sequence belongs to the XseB family. In terms of assembly, heterooligomer composed of large and small subunits.

The protein localises to the cytoplasm. The enzyme catalyses Exonucleolytic cleavage in either 5'- to 3'- or 3'- to 5'-direction to yield nucleoside 5'-phosphates.. In terms of biological role, bidirectionally degrades single-stranded DNA into large acid-insoluble oligonucleotides, which are then degraded further into small acid-soluble oligonucleotides. The chain is Exodeoxyribonuclease 7 small subunit from Escherichia coli (strain SE11).